A 195-amino-acid chain; its full sequence is Large ribosomal subunit protein uL18 (195 aa).

Belongs to the universal ribosomal protein uL18 family. As to quaternary structure, part of the 50S ribosomal subunit. Contacts the 5S and 23S rRNAs.

Functionally, this is one of the proteins that bind and probably mediate the attachment of the 5S RNA into the large ribosomal subunit, where it forms part of the central protuberance. In Korarchaeum cryptofilum (strain OPF8), this protein is Large ribosomal subunit protein uL18.